The following is a 206-amino-acid chain: Large ribosomal subunit protein uL4 (206 aa).

The interval 63 to 94 (MYKQKGTGRARHHSARAPQFRGGGKAHGPVVR) is disordered. Positions 64–77 (YKQKGTGRARHHSA) are enriched in basic residues.

It belongs to the universal ribosomal protein uL4 family. Part of the 50S ribosomal subunit.

One of the primary rRNA binding proteins, this protein initially binds near the 5'-end of the 23S rRNA. It is important during the early stages of 50S assembly. It makes multiple contacts with different domains of the 23S rRNA in the assembled 50S subunit and ribosome. Its function is as follows. Forms part of the polypeptide exit tunnel. The protein is Large ribosomal subunit protein uL4 of Mesorhizobium japonicum (strain LMG 29417 / CECT 9101 / MAFF 303099) (Mesorhizobium loti (strain MAFF 303099)).